The primary structure comprises 478 residues: Light-independent protochlorophyllide reductase subunit N (478 aa).

[4Fe-4S] cluster-binding residues include C22, C47, and C107.

The protein belongs to the BchN/ChlN family. In terms of assembly, protochlorophyllide reductase is composed of three subunits; ChlL, ChlN and ChlB. Forms a heterotetramer of two ChlB and two ChlN subunits. Requires [4Fe-4S] cluster as cofactor.

It is found in the plastid. The protein localises to the chloroplast. It carries out the reaction chlorophyllide a + oxidized 2[4Fe-4S]-[ferredoxin] + 2 ADP + 2 phosphate = protochlorophyllide a + reduced 2[4Fe-4S]-[ferredoxin] + 2 ATP + 2 H2O. The protein operates within porphyrin-containing compound metabolism; chlorophyll biosynthesis (light-independent). Its function is as follows. Component of the dark-operative protochlorophyllide reductase (DPOR) that uses Mg-ATP and reduced ferredoxin to reduce ring D of protochlorophyllide (Pchlide) to form chlorophyllide a (Chlide). This reaction is light-independent. The NB-protein (ChlN-ChlB) is the catalytic component of the complex. The polypeptide is Light-independent protochlorophyllide reductase subunit N (Chlorokybus atmophyticus (Soil alga)).